A 1039-amino-acid polypeptide reads, in one-letter code: FERM domain-containing protein 4A (1039 aa).

An FERM domain is found at 20–322 (RRCQVHLLDD…SQHQFYLDRK (303 aa)). The segment at 358 to 420 (KGKIISGSSG…KLCLREAELT (63 aa)) is necessary for interaction with CYTH1. The segment covering 366–382 (SGSLLSSGSQESDSSQS) has biased composition (low complexity). The interval 366–386 (SGSLLSSGSQESDSSQSAKKD) is disordered. The stretch at 382 to 416 (SAKKDMLAALKSRQEALEETLRQRLEELKKLCLRE) forms a coiled coil. The residue at position 530 (S530) is a Phosphoserine. The interval 553–680 (DEDSQVTSTI…MPSTPDLRVR (128 aa)) is disordered. The segment covering 571–586 (GLPPRPPSHNRPPPPQ) has biased composition (pro residues). The necessary for tight junction and adherens junction localization; Requires for interaction with PARD3 stretch occupies residues 579–939 (HNRPPPPQSL…QWYQRSTASH (361 aa)). Phosphoserine is present on residues S604 and S615. Residues 623-638 (VKKRSSHSHSSSHKRF) show a composition bias toward basic residues. A phosphoserine mark is found at S681 and S711. Disordered stretches follow at residues 713 to 756 (ESQG…HSSS) and 772 to 813 (AEDS…AGGA). The segment covering 788 to 800 (RAAGALGSASSGS) has biased composition (low complexity). A phosphoserine mark is found at S800, S872, and S901. 2 disordered regions span residues 879-968 (FKES…STFV) and 980-1039 (CKAT…STDE). A compositionally biased stretch (polar residues) spans 896–905 (LTPSRSQILR). Basic and acidic residues predominate over residues 912-929 (EGAHDKGAGRAAVSDELR). The segment covering 946–966 (SHTSSTSSDSGSQYSTSSQST) has biased composition (low complexity). Composition is skewed to polar residues over residues 986–1000 (ALPQ…SSEI) and 1013–1023 (TWQTGEATENS).

As to quaternary structure, interacts (via coiled-coil domain) with CYTH1 (via coiled-coil domain). Interacts with PARD3 (via coiled-coil domain). Found in a complex with PARD3, CYTH1 and FRMD4A. Interacts with CYTH2. Interacts with CYTH3.

It is found in the cytoplasm. Its subcellular location is the cytoskeleton. The protein localises to the cell junction. The protein resides in the adherens junction. It localises to the tight junction. Scaffolding protein that regulates epithelial cell polarity by connecting ARF6 activation with the PAR3 complex. Plays a redundant role with FRMD4B in epithelial polarization. May regulate MAPT secretion by activating ARF6-signaling. The polypeptide is FERM domain-containing protein 4A (Homo sapiens (Human)).